The sequence spans 484 residues: Bifunctional protein GlmU (484 aa).

Positions 1–240 (MSNPHSSAVI…HRELAGVNDR (240 aa)) are pyrophosphorylase. Residues 12-15 (LAAG), Lys-26, Gln-83, and 88-89 (GT) contribute to the UDP-N-acetyl-alpha-D-glucosamine site. Asp-113 provides a ligand contact to Mg(2+). UDP-N-acetyl-alpha-D-glucosamine-binding residues include Gly-150, Glu-165, Asn-180, and Asn-238. Asn-238 is a Mg(2+) binding site. The segment at 241–261 (VQLAQAGKILNQRLVEDAMRN) is linker. The tract at residues 262–484 (GATIVDPDTT…QAHAHETKEG (223 aa)) is N-acetyltransferase. Positions 343 and 361 each coordinate UDP-N-acetyl-alpha-D-glucosamine. His-373 functions as the Proton acceptor in the catalytic mechanism. Positions 376 and 387 each coordinate UDP-N-acetyl-alpha-D-glucosamine. Acetyl-CoA is bound by residues Ala-390, 396 to 397 (NY), Ser-415, and Ala-433. The segment at 461–484 (EKNRPGTPAADAARQAHAHETKEG) is disordered.

It in the N-terminal section; belongs to the N-acetylglucosamine-1-phosphate uridyltransferase family. This sequence in the C-terminal section; belongs to the transferase hexapeptide repeat family. As to quaternary structure, homotrimer. Mg(2+) serves as cofactor.

The protein resides in the cytoplasm. The enzyme catalyses alpha-D-glucosamine 1-phosphate + acetyl-CoA = N-acetyl-alpha-D-glucosamine 1-phosphate + CoA + H(+). The catalysed reaction is N-acetyl-alpha-D-glucosamine 1-phosphate + UTP + H(+) = UDP-N-acetyl-alpha-D-glucosamine + diphosphate. It functions in the pathway nucleotide-sugar biosynthesis; UDP-N-acetyl-alpha-D-glucosamine biosynthesis; N-acetyl-alpha-D-glucosamine 1-phosphate from alpha-D-glucosamine 6-phosphate (route II): step 2/2. It participates in nucleotide-sugar biosynthesis; UDP-N-acetyl-alpha-D-glucosamine biosynthesis; UDP-N-acetyl-alpha-D-glucosamine from N-acetyl-alpha-D-glucosamine 1-phosphate: step 1/1. Its pathway is bacterial outer membrane biogenesis; LPS lipid A biosynthesis. In terms of biological role, catalyzes the last two sequential reactions in the de novo biosynthetic pathway for UDP-N-acetylglucosamine (UDP-GlcNAc). The C-terminal domain catalyzes the transfer of acetyl group from acetyl coenzyme A to glucosamine-1-phosphate (GlcN-1-P) to produce N-acetylglucosamine-1-phosphate (GlcNAc-1-P), which is converted into UDP-GlcNAc by the transfer of uridine 5-monophosphate (from uridine 5-triphosphate), a reaction catalyzed by the N-terminal domain. In Corynebacterium diphtheriae (strain ATCC 700971 / NCTC 13129 / Biotype gravis), this protein is Bifunctional protein GlmU.